Here is a 428-residue protein sequence, read N- to C-terminus: Ribulose bisphosphate carboxylase (428 aa).

Lys-151 acts as the Proton acceptor in catalysis. Lys-153 lines the substrate pocket. Mg(2+) contacts are provided by Lys-177, Asp-179, and Glu-180. Lys-177 is subject to N6-carboxylysine. Residue His-270 is the Proton acceptor of the active site. Substrate is bound by residues Arg-271, His-303, 354–356 (SGG), and 376–379 (QFGG).

This sequence belongs to the RuBisCO large chain family. Type III subfamily. In terms of assembly, homodimer or homodecamer. In contrast to form I RuBisCO, the form III RuBisCO is composed solely of large subunits. Mg(2+) is required as a cofactor.

The enzyme catalyses 2 (2R)-3-phosphoglycerate + 2 H(+) = D-ribulose 1,5-bisphosphate + CO2 + H2O. It carries out the reaction D-ribulose 1,5-bisphosphate + O2 = 2-phosphoglycolate + (2R)-3-phosphoglycerate + 2 H(+). Catalyzes the addition of molecular CO(2) and H(2)O to ribulose 1,5-bisphosphate (RuBP), generating two molecules of 3-phosphoglycerate (3-PGA). Functions in an archaeal AMP degradation pathway, together with AMP phosphorylase and R15P isomerase. This chain is Ribulose bisphosphate carboxylase, found in Methanosarcina barkeri (strain Fusaro / DSM 804).